Reading from the N-terminus, the 470-residue chain is Ribosomal protein uS12 methylthiotransferase RimO (470 aa).

The MTTase N-terminal domain occupies 33–143 (NKIGFVSLGC…VLEHVHQYAP (111 aa)). Residues C42, C78, C107, C175, C179, and C182 each coordinate [4Fe-4S] cluster. The region spanning 161-398 (LTPKHYAYLK…MLVQQEISAA (238 aa)) is the Radical SAM core domain. A TRAM domain is found at 401–467 (QKRIGSTMQV…EYDLWGSILH (67 aa)).

This sequence belongs to the methylthiotransferase family. RimO subfamily. [4Fe-4S] cluster is required as a cofactor.

It is found in the cytoplasm. It catalyses the reaction L-aspartate(89)-[ribosomal protein uS12]-hydrogen + (sulfur carrier)-SH + AH2 + 2 S-adenosyl-L-methionine = 3-methylsulfanyl-L-aspartate(89)-[ribosomal protein uS12]-hydrogen + (sulfur carrier)-H + 5'-deoxyadenosine + L-methionine + A + S-adenosyl-L-homocysteine + 2 H(+). Functionally, catalyzes the methylthiolation of an aspartic acid residue of ribosomal protein uS12. The protein is Ribosomal protein uS12 methylthiotransferase RimO of Vibrio cholerae serotype O1 (strain ATCC 39315 / El Tor Inaba N16961).